Consider the following 472-residue polypeptide: MAKCGSCGPGYKSPLDAMKGPREEIVYLPCIYRSTGINKPDYLATVDVDPKSPTYSQVIHRLPMPNVNDELHHSGWNTCSSCYGDSSKVRNKLILPCLISSRVYVVDVGTDPRAPRLHKTVEPHEVYWKCGLANLHTSHCLGCGEIMISALGDPCGNGKGGFVLLDGETFEVKGNWEAEGETAQFGYDFWYQPRHNVMISTEWGAPKAFALGFKMEDVLAGQYGHSLNVWDWTEHRLVQTIDLGKDGLIPLEIRFLHNPDADQGLVGCALSSSIFRFYKEKDGKWAAEKVIQVPSKKVEGWALPEMPGLITDILISLDDRFLYFSNWLHGDIRQYDITNIRNPKLVGQIFLGGSIQKGGPVAVQEDKELECQPDPVTVKGKIIPGGPQMIQLSLDGKRIYVTSSIYSIWDKQFYPDMLKEGAVMLQIDVDTEKGGLKLNPNFLVDFGKEPDGPVLAHELRYPGGDCSSDIWI.

This sequence belongs to the selenium-binding protein family.

It is found in the nucleus. Its subcellular location is the cytoplasm. The protein localises to the cytosol. The protein resides in the membrane. It carries out the reaction methanethiol + O2 + H2O = hydrogen sulfide + formaldehyde + H2O2 + H(+). It participates in organosulfur degradation. Its function is as follows. Catalyzes the oxidation of methanethiol, an organosulfur compound known to be produced in substantial amounts by gut bacteria. Selenium-binding protein which may be involved in the sensing of reactive xenobiotics in the cytoplasm. May be involved in intra-Golgi protein transport. This is Methanethiol oxidase (selenbp1-b) from Xenopus laevis (African clawed frog).